Here is a 247-residue protein sequence, read N- to C-terminus: E3 ubiquitin-protein ligase RNF182 (247 aa).

The RING-type zinc finger occupies 20-68; it reads CKICYNRYNLKQRKPKVLECCHRVCAKCLYKIIDFGDSPQGVIVCPFCR. 2 helical membrane-spanning segments follow: residues 184–204 and 211–231; these read VLVW…IYLL and LGVV…VYGF.

Interacts with ATP6V0C. As to expression, up-regulated in neuronal cells subjected to cell death-inducing injuries, such as oxygen and glucose deprivation (at protein level). Could be up-regulated in Alzheimer disease brains. Highly expressed in innate immune organs such as lymph nodes and spleen and in immune cells such as macrophages and dendritic cells.

It is found in the membrane. Its subcellular location is the cytoplasm. It catalyses the reaction S-ubiquitinyl-[E2 ubiquitin-conjugating enzyme]-L-cysteine + [acceptor protein]-L-lysine = [E2 ubiquitin-conjugating enzyme]-L-cysteine + N(6)-ubiquitinyl-[acceptor protein]-L-lysine.. It participates in protein modification; protein ubiquitination. E3 ubiquitin-protein ligase that mediates the ubiquitination of ATP6V0C and targets it to degradation via the ubiquitin-proteasome pathway. Also plays a role in the inhibition of TLR-triggered innate immune response by mediating 'Lys'-48-linked ubiquitination and subsequent degradation of NF-kappa-B component RELA. The polypeptide is E3 ubiquitin-protein ligase RNF182 (RNF182) (Homo sapiens (Human)).